A 126-amino-acid chain; its full sequence is Holo-[acyl-carrier-protein] synthase (126 aa).

2 residues coordinate Mg(2+): D9 and E58.

The protein belongs to the P-Pant transferase superfamily. AcpS family. It depends on Mg(2+) as a cofactor.

The protein resides in the cytoplasm. It catalyses the reaction apo-[ACP] + CoA = holo-[ACP] + adenosine 3',5'-bisphosphate + H(+). Its function is as follows. Transfers the 4'-phosphopantetheine moiety from coenzyme A to a Ser of acyl-carrier-protein. In Salmonella paratyphi B (strain ATCC BAA-1250 / SPB7), this protein is Holo-[acyl-carrier-protein] synthase.